A 117-amino-acid polypeptide reads, in one-letter code: Transcription elongation factor SPT4 (117 aa).

The interval 1-40 is interaction with SUPT5H; sequence MSLETVPKDLRHLRACLLCSLVKTIDQFEYDGCDNCESYL. The segment at 16–36 adopts a C4-type zinc-finger fold; sequence CLLCSLVKTIDQFEYDGCDNC.

The protein belongs to the SPT4 family. As to quaternary structure, interacts with SUPT5H to form the DSIF complex. DSIF interacts with RNA polymerase II and with the positive transcription elongation factor b complex (P-TEFb complex), which is composed of CDK9 and cyclin-T.

The protein localises to the nucleus. Its function is as follows. May function as a component of the DRB sensitivity-inducing factor complex (DSIF complex), which regulates transcription elongation by RNA polymerase II. Probably enhances transcriptional pausing at sites proximal to the promoter, which may facilitate the assembly of an elongation competent RNA polymerase II complex. Also acts to stimulate transcriptional elongation at low nucleotide concentrations. Regulation of transcriptional elongation by this protein is required for the expression of genes which control neuronal development. The polypeptide is Transcription elongation factor SPT4 (supt4h1) (Danio rerio (Zebrafish)).